The following is a 287-amino-acid chain: Nucleotide-binding protein VP2673 (287 aa).

ATP is bound at residue 8–15 (GHSGAGKS). Residue 56 to 59 (DIRN) coordinates GTP.

Belongs to the RapZ-like family.

Its function is as follows. Displays ATPase and GTPase activities. The sequence is that of Nucleotide-binding protein VP2673 from Vibrio parahaemolyticus serotype O3:K6 (strain RIMD 2210633).